A 218-amino-acid polypeptide reads, in one-letter code: MRLKNKPWANELVEEHPESALDRPNPAEKIDWAARFGNDKPIEIEVGSGKGQFITTLAKQHPDRNFVAMEIQKTAAGIILKKKLDEGLDNLQILCADAANLVAYFGENSTSKIYLNFSDPWPKSRHEKRRLTYKDFLAKYQAVLTGDGLIEFKTDNSGLFAYSVKSMNNYGMHFDFMSVDLHHESEEIVEKNVETEYEHKFASKGQPIYCLHAGFLAK.

The disordered stretch occupies residues 1–25; the sequence is MRLKNKPWANELVEEHPESALDRPN. A compositionally biased stretch (basic and acidic residues) spans 13–25; that stretch reads VEEHPESALDRPN. Residues Glu45, Glu70, Asp97, and Asp119 each coordinate S-adenosyl-L-methionine. Residue Asp119 is part of the active site. Substrate is bound at residue Lys123. The interval 125-130 is interaction with RNA; the sequence is RHEKRR. Substrate-binding positions include Asp155 and 195 to 198; that span reads TEYE.

It belongs to the class I-like SAM-binding methyltransferase superfamily. TrmB family.

The enzyme catalyses guanosine(46) in tRNA + S-adenosyl-L-methionine = N(7)-methylguanosine(46) in tRNA + S-adenosyl-L-homocysteine. It participates in tRNA modification; N(7)-methylguanine-tRNA biosynthesis. Catalyzes the formation of N(7)-methylguanine at position 46 (m7G46) in tRNA. The polypeptide is tRNA (guanine-N(7)-)-methyltransferase (Lactobacillus delbrueckii subsp. bulgaricus (strain ATCC BAA-365 / Lb-18)).